Reading from the N-terminus, the 166-residue chain is Glycine-rich RNA-binding protein GRP1A (166 aa).

Positions 8-86 (YRCFVGGLAW…RSITVNEAQS (79 aa)) constitute an RRM domain. The disordered stretch occupies residues 68-166 (GMNGQDLDGR…YGGSGGGGGW (99 aa)). Composition is skewed to gly residues over residues 88–146 (GSGG…YGGG) and 153–166 (EGGG…GGGW).

In terms of tissue distribution, predominantly expressed in meristematic and growing tissue.

It localises to the nucleus. May play a general role in circadian phenomena associated with meristematic tissue. This chain is Glycine-rich RNA-binding protein GRP1A, found in Sinapis alba (White mustard).